Consider the following 1004-residue polypeptide: Copper-transporting ATPase (1004 aa).

The Cytoplasmic segment spans residues 1–262 (MREVILAVHG…FWKKNSIKST (262 aa)). HMA domains are found at residues 2–67 (REVI…FDCE) and 80–146 (KEGL…FDSN). Residues C13, C16, C91, and C94 each contribute to the Cu(+) site. A helical transmembrane segment spans residues 263-283 (LLAIICMLLYMIVPMMWPTIV). Residues 284–303 (QDRIFPYKETSFVRGLFYRD) lie on the Lumenal, vesicle side of the membrane. A helical transmembrane segment spans residues 304 to 324 (ILGVILASYIQFSVGFYFYKA). Over 325 to 335 (AWASLKHGSGT) the chain is Cytoplasmic. A helical membrane pass occupies residues 336-356 (MDTLVCVSTTCAYTFSVFSLV). At 357-370 (HNMFHPSSTGKLPR) the chain is on the lumenal, vesicle side. The chain crosses the membrane as a helical span at residues 371 to 391 (IVFDTSIMIISYISIGKYLET). The Cytoplasmic portion of the chain corresponds to 392 to 528 (LAKSQTSTAL…IQGYADYLAS (137 aa)). A helical membrane pass occupies residues 529–549 (IFVPGILILAVLTFFIWCFIL). Topologically, residues 550–577 (NISANPPVAFTANTKADNFFICLQTATS) are lumenal, vesicle. The helical transmembrane segment at 578–598 (VVIVACPCALGLATPTAIMVG) threads the bilayer. Residues 599-901 (TGVGAQNGVL…LKTFKRIKLN (303 aa)) are Cytoplasmic-facing. D627 acts as the 4-aspartylphosphate intermediate in catalysis. D838 and D842 together coordinate Mg(2+). A helical membrane pass occupies residues 902-924 (LFWALCYNIFMIPIAMGVLIPWG). Residues 925-927 (ITL) lie on the Lumenal, vesicle side of the membrane. The chain crosses the membrane as a helical span at residues 928-950 (PPMLAGLAMAFSSVSVVLSSLML). Over 951–1004 (KKWTPPDIESHGISDFKSKFSIGNFWSRLFSTRAIAGEQDIESQAGLMSNEEVL) the chain is Cytoplasmic.

This sequence belongs to the cation transport ATPase (P-type) (TC 3.A.3) family. Type IB subfamily. In terms of assembly, interacts with the copper chaperone ATX1 via the copper anion.

Its subcellular location is the golgi apparatus. The protein localises to the trans-Golgi network membrane. The enzyme catalyses Cu(+)(in) + ATP + H2O = Cu(+)(out) + ADP + phosphate + H(+). In terms of biological role, copper-transporting P-type ATPase necessary for the proper uptake of iron. Required for export of copper from cytosol into extracytosolic compartment. Retrieves copper from the metallochaperone ATX1 and incorporates it into trans-Golgi vesicles where they are acquired by the cell-surface iron transporter FET3. Required the production of inositolphosphorylceramide D, probably by delivering copper to a yet to be identified enzyme. The polypeptide is Copper-transporting ATPase (Saccharomyces cerevisiae (strain ATCC 204508 / S288c) (Baker's yeast)).